The sequence spans 363 residues: Ribosomal RNA large subunit methyltransferase M (363 aa).

S-adenosyl-L-methionine is bound by residues Ser-190, 223-226 (CPGG), Asp-242, Asp-262, and Asp-279. The active-site Proton acceptor is Lys-308.

This sequence belongs to the class I-like SAM-binding methyltransferase superfamily. RNA methyltransferase RlmE family. RlmM subfamily. Monomer.

It localises to the cytoplasm. It catalyses the reaction cytidine(2498) in 23S rRNA + S-adenosyl-L-methionine = 2'-O-methylcytidine(2498) in 23S rRNA + S-adenosyl-L-homocysteine + H(+). In terms of biological role, catalyzes the 2'-O-methylation at nucleotide C2498 in 23S rRNA. This chain is Ribosomal RNA large subunit methyltransferase M, found in Vibrio atlanticus (strain LGP32) (Vibrio splendidus (strain Mel32)).